The following is a 77-amino-acid chain: Translation initiation factor IF-1, chloroplastic (77 aa).

Positions 1–71 (MKEQKLIHEG…TKGRIIYRLR (71 aa)) constitute an S1-like domain.

It belongs to the IF-1 family. In terms of assembly, component of the 30S ribosomal translation pre-initiation complex which assembles on the 30S ribosome in the order IF-2 and IF-3, IF-1 and N-formylmethionyl-tRNA(fMet); mRNA recruitment can occur at any time during PIC assembly.

It is found in the plastid. Its subcellular location is the chloroplast. Functionally, one of the essential components for the initiation of protein synthesis. Stabilizes the binding of IF-2 and IF-3 on the 30S subunit to which N-formylmethionyl-tRNA(fMet) subsequently binds. Helps modulate mRNA selection, yielding the 30S pre-initiation complex (PIC). Upon addition of the 50S ribosomal subunit IF-1, IF-2 and IF-3 are released leaving the mature 70S translation initiation complex. The protein is Translation initiation factor IF-1, chloroplastic of Drimys granadensis.